Consider the following 475-residue polypeptide: Cytosolic non-specific dipeptidase (475 aa).

Phosphoserine is present on Ser58. His99 is a Mn(2+) binding site. Residue Asp101 is part of the active site. Asp132 serves as a coordination point for Mn(2+). The active-site Proton acceptor is Glu166. Residues 166–167, Asp195, and His228 each bind substrate; that span reads EE. Mn(2+) contacts are provided by Glu167 and Asp195. Ser299 carries the phosphoserine modification. Substrate contacts are provided by Thr330, Arg343, Ser417, and His445. Residue His445 participates in Mn(2+) binding.

It belongs to the peptidase M20A family. Homodimer. It depends on Mn(2+) as a cofactor. Highly expressed in the parafascicular nucleus of the thalamus, tuberomammillary nucleus of the hypothalamus and the mitral cell layer of the olfactory bulb.

It is found in the cytoplasm. It catalyses the reaction Hydrolysis of dipeptides, preferentially hydrophobic dipeptides including prolyl amino acids.. The enzyme catalyses L-threonyl-L-threonine + H2O = 2 L-threonine. The catalysed reaction is L-threonyl-L-serine + H2O = L-threonine + L-serine. It carries out the reaction L-seryl-L-threonine + H2O = L-threonine + L-serine. It catalyses the reaction L-cysteinylglycine + H2O = L-cysteine + glycine. The enzyme catalyses L-alanyl-L-cysteine + H2O = L-cysteine + L-alanine. The catalysed reaction is (S)-lactate + L-phenylalanine = N-[(S)-lactoyl]-L-phenylalanine + H2O. Its activity is regulated as follows. Inhibited by bestatin. Functionally, catalyzes the peptide bond hydrolysis in dipeptides, displaying a non-redundant activity toward threonyl dipeptides. Mediates threonyl dipeptide catabolism in a tissue-specific way. Has high dipeptidase activity toward cysteinylglycine, an intermediate metabolite in glutathione metabolism. Metabolizes N-lactoyl-amino acids, both through hydrolysis to form lactic acid and amino acids, as well as through their formation by reverse proteolysis. Plays a role in the regulation of cell cycle arrest and apoptosis. The sequence is that of Cytosolic non-specific dipeptidase (Cndp2) from Mus musculus (Mouse).